A 512-amino-acid polypeptide reads, in one-letter code: ATP synthase subunit alpha (512 aa).

G169–T176 is an ATP binding site.

The protein belongs to the ATPase alpha/beta chains family. F-type ATPases have 2 components, CF(1) - the catalytic core - and CF(0) - the membrane proton channel. CF(1) has five subunits: alpha(3), beta(3), gamma(1), delta(1), epsilon(1). CF(0) has three main subunits: a(1), b(2) and c(9-12). The alpha and beta chains form an alternating ring which encloses part of the gamma chain. CF(1) is attached to CF(0) by a central stalk formed by the gamma and epsilon chains, while a peripheral stalk is formed by the delta and b chains.

It is found in the cell inner membrane. It carries out the reaction ATP + H2O + 4 H(+)(in) = ADP + phosphate + 5 H(+)(out). Functionally, produces ATP from ADP in the presence of a proton gradient across the membrane. The alpha chain is a regulatory subunit. This is ATP synthase subunit alpha from Aromatoleum aromaticum (strain DSM 19018 / LMG 30748 / EbN1) (Azoarcus sp. (strain EbN1)).